The primary structure comprises 89 residues: Exodeoxyribonuclease 7 small subunit (89 aa).

This sequence belongs to the XseB family. As to quaternary structure, heterooligomer composed of large and small subunits.

Its subcellular location is the cytoplasm. The enzyme catalyses Exonucleolytic cleavage in either 5'- to 3'- or 3'- to 5'-direction to yield nucleoside 5'-phosphates.. Functionally, bidirectionally degrades single-stranded DNA into large acid-insoluble oligonucleotides, which are then degraded further into small acid-soluble oligonucleotides. This chain is Exodeoxyribonuclease 7 small subunit, found in Chlorobium phaeobacteroides (strain DSM 266 / SMG 266 / 2430).